The primary structure comprises 96 residues: UPF0235 protein VV1_1522 (96 aa).

Belongs to the UPF0235 family.

This chain is UPF0235 protein VV1_1522, found in Vibrio vulnificus (strain CMCP6).